Reading from the N-terminus, the 415-residue chain is Probable peptidoglycan glycosyltransferase FtsW (415 aa).

Transmembrane regions (helical) follow at residues 31–51 (PILMVAVLALLAWGLVMVTSA), 63–83 (FFFVIRQTIAVVIGASITVWL), 97–117 (LWILIASLLLLLVVLLPGIGH), 133–153 (IQVSEFARLGLIIWMAGYIAT), 162–182 (ITGMLGPGVVIFAASLLLLLQ), 185–205 (FGTTAVLAATLFAMAWLARAQ), 206–226 (WQMMVGSTLVMGVLGVFVVLS), 245–265 (FGHGYQLANALIAIGTGGVWG), 285–305 (FIFAVLAEELGLIGVIALIGL), 326–346 (IAGAALAWGISVWIGMQALIN), and 361–381 (LPLMSYGGSAMIVALISLGFL).

This sequence belongs to the SEDS family. FtsW subfamily.

It localises to the cell inner membrane. The enzyme catalyses [GlcNAc-(1-&gt;4)-Mur2Ac(oyl-L-Ala-gamma-D-Glu-L-Lys-D-Ala-D-Ala)](n)-di-trans,octa-cis-undecaprenyl diphosphate + beta-D-GlcNAc-(1-&gt;4)-Mur2Ac(oyl-L-Ala-gamma-D-Glu-L-Lys-D-Ala-D-Ala)-di-trans,octa-cis-undecaprenyl diphosphate = [GlcNAc-(1-&gt;4)-Mur2Ac(oyl-L-Ala-gamma-D-Glu-L-Lys-D-Ala-D-Ala)](n+1)-di-trans,octa-cis-undecaprenyl diphosphate + di-trans,octa-cis-undecaprenyl diphosphate + H(+). The protein operates within cell wall biogenesis; peptidoglycan biosynthesis. Peptidoglycan polymerase that is essential for cell division. In Halothiobacillus neapolitanus (strain ATCC 23641 / c2) (Thiobacillus neapolitanus), this protein is Probable peptidoglycan glycosyltransferase FtsW.